A 733-amino-acid polypeptide reads, in one-letter code: Phosphoribosylformylglycinamidine synthase subunit PurL (733 aa).

Residue H41 is part of the active site. Residues Y44 and K83 each coordinate ATP. E85 is a binding site for Mg(2+). Residues 86–89 and R108 contribute to the substrate site; that span reads SHNH. Catalysis depends on H87, which acts as the Proton acceptor. Mg(2+) is bound at residue D109. The segment at 212–232 is disordered; sequence GASFASQELSEESEEKRPSVQ. Substrate is bound at residue Q232. Position 260 (D260) interacts with Mg(2+). A substrate-binding site is contributed by 304-306; the sequence is ESQ. Residues D488 and G525 each contribute to the ATP site. N526 is a Mg(2+) binding site. S528 provides a ligand contact to substrate.

Belongs to the FGAMS family. In terms of assembly, monomer. Part of the FGAM synthase complex composed of 1 PurL, 1 PurQ and 2 PurS subunits.

It localises to the cytoplasm. It catalyses the reaction N(2)-formyl-N(1)-(5-phospho-beta-D-ribosyl)glycinamide + L-glutamine + ATP + H2O = 2-formamido-N(1)-(5-O-phospho-beta-D-ribosyl)acetamidine + L-glutamate + ADP + phosphate + H(+). Its pathway is purine metabolism; IMP biosynthesis via de novo pathway; 5-amino-1-(5-phospho-D-ribosyl)imidazole from N(2)-formyl-N(1)-(5-phospho-D-ribosyl)glycinamide: step 1/2. In terms of biological role, part of the phosphoribosylformylglycinamidine synthase complex involved in the purines biosynthetic pathway. Catalyzes the ATP-dependent conversion of formylglycinamide ribonucleotide (FGAR) and glutamine to yield formylglycinamidine ribonucleotide (FGAM) and glutamate. The FGAM synthase complex is composed of three subunits. PurQ produces an ammonia molecule by converting glutamine to glutamate. PurL transfers the ammonia molecule to FGAR to form FGAM in an ATP-dependent manner. PurS interacts with PurQ and PurL and is thought to assist in the transfer of the ammonia molecule from PurQ to PurL. In Thermoanaerobacter pseudethanolicus (strain ATCC 33223 / 39E) (Clostridium thermohydrosulfuricum), this protein is Phosphoribosylformylglycinamidine synthase subunit PurL.